Reading from the N-terminus, the 704-residue chain is Elongation factor G 1 (704 aa).

The tr-type G domain maps to 8–291; it reads ERYRNIGISA…AVIDYLPSPA (284 aa). Residues 17-24, 88-92, and 142-145 each bind GTP; these read AHIDAGKT, DTPGH, and NKMD.

The protein belongs to the TRAFAC class translation factor GTPase superfamily. Classic translation factor GTPase family. EF-G/EF-2 subfamily.

Its subcellular location is the cytoplasm. Catalyzes the GTP-dependent ribosomal translocation step during translation elongation. During this step, the ribosome changes from the pre-translocational (PRE) to the post-translocational (POST) state as the newly formed A-site-bound peptidyl-tRNA and P-site-bound deacylated tRNA move to the P and E sites, respectively. Catalyzes the coordinated movement of the two tRNA molecules, the mRNA and conformational changes in the ribosome. This is Elongation factor G 1 from Burkholderia mallei (strain ATCC 23344).